A 190-amino-acid chain; its full sequence is Iron-sulfur assembly protein 1 (190 aa).

The segment at 49–71 (PSLKPSAAGSGSTAPKPVTEREI) is disordered. The Fe cation site is built by Cys116, Cys180, and Cys182.

It belongs to the HesB/IscA family.

The protein resides in the mitochondrion matrix. Its function is as follows. Involved in the assembly of mitochondrial and cytoplasmic iron-sulfur proteins. Probably involved in the binding of an intermediate of Fe/S cluster assembly. This is Iron-sulfur assembly protein 1 (isa1) from Schizosaccharomyces pombe (strain 972 / ATCC 24843) (Fission yeast).